A 159-amino-acid chain; its full sequence is Phosphopantetheine adenylyltransferase (159 aa).

Substrate is bound at residue Ser-10. Residues 10–11 and His-18 each bind ATP; that span reads SF. Residues Lys-42, Leu-77, and Lys-91 each coordinate substrate. Residues 92-94, Glu-102, and 126-132 contribute to the ATP site; these read GIR and NAHVSSS.

It belongs to the bacterial CoaD family. In terms of assembly, homohexamer. The cofactor is Mg(2+).

It is found in the cytoplasm. The catalysed reaction is (R)-4'-phosphopantetheine + ATP + H(+) = 3'-dephospho-CoA + diphosphate. It functions in the pathway cofactor biosynthesis; coenzyme A biosynthesis; CoA from (R)-pantothenate: step 4/5. In terms of biological role, reversibly transfers an adenylyl group from ATP to 4'-phosphopantetheine, yielding dephospho-CoA (dPCoA) and pyrophosphate. The sequence is that of Phosphopantetheine adenylyltransferase from Leifsonia xyli subsp. xyli (strain CTCB07).